The following is a 23-amino-acid chain: GLWQLIKDKIKDAATGFVTGIQS.

As to expression, expressed by the skin dorsal glands.

It localises to the secreted. In terms of biological role, has no antimicrobial activity. This chain is Dahlein-4.1, found in Ranoidea dahlii (Dahl's aquatic frog).